Reading from the N-terminus, the 519-residue chain is Aspartokinase (519 aa).

The residue at position 326 (Ser-326) is a Phosphoserine. At Thr-328 the chain carries Phosphothreonine. An ACT domain is found at 436-518 (LVGKHMRNTT…MLVEKPWLYS (83 aa)).

It belongs to the aspartokinase family.

It catalyses the reaction L-aspartate + ATP = 4-phospho-L-aspartate + ADP. It functions in the pathway amino-acid biosynthesis; L-methionine biosynthesis via de novo pathway; L-homoserine from L-aspartate: step 1/3. Its pathway is amino-acid biosynthesis; L-threonine biosynthesis; L-threonine from L-aspartate: step 1/5. Functionally, phosphorylates aspartate, the first step in the biosynthesis of amino acids that derive from aspartate (the aspartate family of amino acids), including methioinine and threonine, the latter of which is a precursor to isoleucine. The protein is Aspartokinase of Schizosaccharomyces pombe (strain 972 / ATCC 24843) (Fission yeast).